Consider the following 362-residue polypeptide: Heat-inducible transcription repressor HrcA (362 aa).

Belongs to the HrcA family.

Functionally, negative regulator of class I heat shock genes (grpE-dnaK-dnaJ and groELS operons). Prevents heat-shock induction of these operons. The polypeptide is Heat-inducible transcription repressor HrcA (Nitrobacter hamburgensis (strain DSM 10229 / NCIMB 13809 / X14)).